The primary structure comprises 956 residues: Outer capsid protein VP2 (956 aa).

The protein belongs to the orbivirus VP2 family.

It localises to the virion. In terms of biological role, the VP2 protein is one of the two proteins (with VP5) which constitute the virus particle outer capsid. It is the major target of the host immunogenic response. Responsible for viral attachment to target host cell, probably by binding to sialic acid. This attachment induces virion internalization predominantly through clathrin-dependent endocytosis. In Bluetongue virus 10 (isolate USA) (BTV 10), this protein is Outer capsid protein VP2 (Segment-2).